The following is a 383-amino-acid chain: 3-ketosteroid-9-alpha-monooxygenase, oxygenase component (383 aa).

Residues 24–126 (WHCLGPVKNF…TDVRGGLLFV (103 aa)) enclose the Rieske domain. [2Fe-2S] cluster contacts are provided by C65, H67, C84, and H87. The Fe cation site is built by N173, H179, H184, and D302.

In terms of assembly, homotrimer. The two-component system 3-ketosteroid-9-alpha-monooxygenase is composed of an oxygenase component KshA and a reductase component KshB. Requires [2Fe-2S] cluster as cofactor. Fe cation is required as a cofactor.

The catalysed reaction is androsta-1,4-diene-3,17-dione + 2 reduced [2Fe-2S]-[ferredoxin] + O2 + 2 H(+) = 9alpha-hydroxyandrosta-1,4-diene-3,17-dione + 2 oxidized [2Fe-2S]-[ferredoxin] + H2O. It participates in lipid metabolism; steroid biosynthesis. Its function is as follows. Involved in the degradation of cholesterol. Catalyzes the introduction of a 9a-hydroxyl moiety into 1,4-androstadiene-3,17-dione (ADD) to yield the 9alpha-hydroxy-1,4-androstadiene-3,17-dione (9OHADD) intermediate which spontaneously form 3-hydroxy-9,10-seconandrost-1,3,5(10)-triene-9,17-dione (HSA) via the meta-cleavage of ring B with concomitant aromatization of ring A. This is 3-ketosteroid-9-alpha-monooxygenase, oxygenase component (kshA) from Mycolicibacterium smegmatis (strain ATCC 700084 / mc(2)155) (Mycobacterium smegmatis).